A 444-amino-acid chain; its full sequence is DNA repair protein RadA (444 aa).

The segment at 8–25 (CSNCGNISPKWSGQCFDC) adopts a C4-type zinc-finger fold. Residue 89-96 (GDPGIGKS) participates in ATP binding. Positions 248–252 (KNRFG) match the RadA KNRFG motif motif. Residues 347–444 (EVYLSIAGGL…HLKDLKEIIK (98 aa)) are lon-protease-like.

This sequence belongs to the RecA family. RadA subfamily.

In terms of biological role, DNA-dependent ATPase involved in processing of recombination intermediates, plays a role in repairing DNA breaks. Stimulates the branch migration of RecA-mediated strand transfer reactions, allowing the 3' invading strand to extend heteroduplex DNA faster. Binds ssDNA in the presence of ADP but not other nucleotides, has ATPase activity that is stimulated by ssDNA and various branched DNA structures, but inhibited by SSB. Does not have RecA's homology-searching function. The protein is DNA repair protein RadA of Rickettsia conorii (strain ATCC VR-613 / Malish 7).